Reading from the N-terminus, the 236-residue chain is Peptidase E (236 aa).

Catalysis depends on charge relay system residues serine 122, aspartate 137, and histidine 159.

Belongs to the peptidase S51 family.

The protein localises to the cytoplasm. The catalysed reaction is Dipeptidase E catalyzes the hydrolysis of dipeptides Asp-|-Xaa. It does not act on peptides with N-terminal Glu, Asn or Gln, nor does it cleave isoaspartyl peptides.. Its function is as follows. Hydrolyzes dipeptides containing N-terminal aspartate residues. May play a role in allowing the cell to use peptide aspartate to spare carbon otherwise required for the synthesis of the aspartate family of amino acids. The chain is Peptidase E from Shewanella putrefaciens (strain CN-32 / ATCC BAA-453).